The following is a 446-amino-acid chain: Alkylglycerol monooxygenase (446 aa).

2 helical membrane-spanning segments follow: residues 39-59 (VNQA…LGWL) and 103-123 (FHFL…FLGV). Positions 117–248 (WLAFLGVDMG…LIIWDRMFGT (132 aa)) constitute a Fatty acid hydroxylase domain. A Histidine box-1 motif is present at residues 131–135 (HRFAH). The short motif at 144 to 148 (HQVHH) is the Histidine box-2 element. Residues 167–187 (FSSWIFYSPLALLIPPSVFAV) traverse the membrane as a helical segment. The Histidine box-3 motif lies at 220 to 224 (HRVHH). The next 3 helical transmembrane spans lie at 329 to 349 (AWSP…LDVY), 362 to 382 (LTVI…GFLI), and 410 to 430 (PLLP…TIYW).

This sequence belongs to the sterol desaturase family. TMEM195 subfamily. Requires Fe cation as cofactor.

Its subcellular location is the endoplasmic reticulum membrane. The enzyme catalyses 1-O-(1,2-saturated-alkyl)-sn-glycerol + (6R)-L-erythro-5,6,7,8-tetrahydrobiopterin + O2 = a 1-(1-hydroxyalkyl)-sn-glycerol + (6R)-L-erythro-6,7-dihydrobiopterin + H2O. In terms of biological role, glyceryl-ether monooxygenase that cleaves the O-alkyl bond of ether lipids. Ether lipids are essential components of brain membranes. In Danio rerio (Zebrafish), this protein is Alkylglycerol monooxygenase (agmo).